The following is a 188-amino-acid chain: MKRGLFVGRFQPVHKGHIKALEFVFDQVDEVIIGIGSAQASHTLKNPFTTGERMEMLIRALDESGLSKKKRYYLIPLPDINFNAIWVPYVESMVPKFEVVFTGNSLVAQLFRERGYKVVVQPMFKKDILSATEIRRRMIEGEPWEDLVPKSVAEYIKEIRGVERIRMLATNLESSEKELQAPIRIPEY.

The protein belongs to the archaeal NMN adenylyltransferase family.

Its subcellular location is the cytoplasm. It catalyses the reaction beta-nicotinamide D-ribonucleotide + ATP + H(+) = diphosphate + NAD(+). Its pathway is cofactor biosynthesis; NAD(+) biosynthesis; NAD(+) from nicotinamide D-ribonucleotide: step 1/1. This Pyrococcus furiosus (strain ATCC 43587 / DSM 3638 / JCM 8422 / Vc1) protein is Nicotinamide-nucleotide adenylyltransferase.